The primary structure comprises 481 residues: Palmitoyltransferase PFA4 (481 aa).

The interval 1–22 is disordered; it reads MTNQDPDDGAYPSSQSDDDGIE. Over 1–66 the chain is Cytoplasmic; sequence MTNQDPDDGA…APLTGRRRTP (66 aa). The chain crosses the membrane as a helical span at residues 67-87; the sequence is LSWTEVIWVSLTLLLIAVLGY. The Lumenal segment spans residues 88 to 108; that stretch reads SSQLYVMLPYYEKTPSFSPQA. A helical membrane pass occupies residues 109 to 129; that stretch reads LAAVLVPFNLGLLAIYYNYWL. Topologically, residues 130–223 are cytoplasmic; it reads CVTTDAGSVP…LANCVGHFNH (94 aa). The DHHC domain occupies 181–231; that stretch reads RYCKTCSAFKPPRSHHCKTCQRCVLRMDHHCPWLANCVGHFNHAHFIRFLF. Cys211 functions as the S-palmitoyl cysteine intermediate in the catalytic mechanism. Residues 224 to 244 form a helical membrane-spanning segment; sequence AHFIRFLFYVDVTCLYHLIMI. Over 245–265 the chain is Lumenal; sequence SCRVLDSFNSYTYWREPCARE. Residues 266–286 form a helical membrane-spanning segment; it reads LVWLVVNYALCIPVILLVGIF. Topologically, residues 287 to 481 are cytoplasmic; sequence SLYHFYCLAV…EVRPHTPWSV (195 aa). The segment at 370–481 is disordered; the sequence is SQYRWPPKDP…EVRPHTPWSV (112 aa). A compositionally biased stretch (low complexity) spans 418 to 431; it reads SSPSSSDSHSSLHL. Basic and acidic residues-rich tracts occupy residues 441–452 and 466–475; these read LPHHFDPPHDPD and RGSEGYEVRP.

It belongs to the DHHC palmitoyltransferase family. PFA4 subfamily.

It localises to the endoplasmic reticulum membrane. It catalyses the reaction L-cysteinyl-[protein] + hexadecanoyl-CoA = S-hexadecanoyl-L-cysteinyl-[protein] + CoA. In terms of biological role, mediates the reversible addition of palmitate to target proteins, thereby regulating their membrane association and biological function. In Mycosarcoma maydis (Corn smut fungus), this protein is Palmitoyltransferase PFA4.